Consider the following 143-residue polypeptide: Antiholin-like protein LrgA (143 aa).

The next 4 helical transmembrane spans lie at 6-26 (VYSFLSQAFIFSAIMLISNII), 30-50 (LPIPMPSSVIGLVILFSLLCL), 61-81 (LGTALTGIIGFLFVPSGISVI), and 97-117 (VIVVATVILLAVTGLFAQFIL).

The protein belongs to the CidA/LrgA family. LrgA subfamily.

The protein localises to the cell membrane. In terms of biological role, inhibits the expression or activity of extracellular murein hydrolases by interacting, possibly with LrgB, with the holin-like protein CidA. The LrgAB and CidA proteins may affect the proton motive force of the membrane. May be involved in programmed cell death (PCD), possibly triggering PCD in response to antibiotics and environmental stresses. This chain is Antiholin-like protein LrgA, found in Bacillus cereus (strain AH187).